A 624-amino-acid polypeptide reads, in one-letter code: Glutamine--fructose-6-phosphate aminotransferase [isomerizing] (624 aa).

Catalysis depends on Cys-2, which acts as the Nucleophile; for GATase activity. The 225-residue stretch at 2–226 (CGIVGYVGQQ…QDQAVVLTAD (225 aa)) folds into the Glutamine amidotransferase type-2 domain. SIS domains lie at 297-436 (SDQE…ARGT) and 469-614 (LAQR…VDKP). Catalysis depends on Lys-619, which acts as the For Fru-6P isomerization activity.

Homodimer.

The protein localises to the cytoplasm. The catalysed reaction is D-fructose 6-phosphate + L-glutamine = D-glucosamine 6-phosphate + L-glutamate. Functionally, catalyzes the first step in hexosamine metabolism, converting fructose-6P into glucosamine-6P using glutamine as a nitrogen source. The polypeptide is Glutamine--fructose-6-phosphate aminotransferase [isomerizing] (Mycolicibacterium paratuberculosis (strain ATCC BAA-968 / K-10) (Mycobacterium paratuberculosis)).